The primary structure comprises 82 residues: Turripeptide OL139 (82 aa).

The segment at 58–82 (HRTTRDTADKTHGGSQRDRFFQSIA) is disordered.

Contains 6 disulfide bonds. In terms of tissue distribution, expressed by the venom duct.

Its subcellular location is the secreted. Acts as a neurotoxin by inhibiting an ion channel. The sequence is that of Turripeptide OL139 from Iotyrris olangoensis (Sea snail).